Consider the following 1397-residue polypeptide: DNA-directed RNA polymerase subunit beta' (1397 aa).

Positions 75, 77, 90, and 93 each coordinate Zn(2+). The Mg(2+) site is built by Asp465, Asp467, and Asp469. Zn(2+)-binding residues include Cys819, Cys893, Cys900, and Cys903.

Belongs to the RNA polymerase beta' chain family. The RNAP catalytic core consists of 2 alpha, 1 beta, 1 beta' and 1 omega subunit. When a sigma factor is associated with the core the holoenzyme is formed, which can initiate transcription. Mg(2+) serves as cofactor. The cofactor is Zn(2+).

The catalysed reaction is RNA(n) + a ribonucleoside 5'-triphosphate = RNA(n+1) + diphosphate. DNA-dependent RNA polymerase catalyzes the transcription of DNA into RNA using the four ribonucleoside triphosphates as substrates. In Acinetobacter baumannii (strain SDF), this protein is DNA-directed RNA polymerase subunit beta'.